A 137-amino-acid chain; its full sequence is MRFRWVWLFVIMLLLAECQPSYWVLEKDRIGEGSPDLEIYANYLQMHDDVKGYQVFTISEGKKMVVVSLGSSEKDKKLEVSDVKFSSKETIVTVERKPAPTANEKNPFILIGLDKIEGDLIVQDETGDRFEETDYQQ.

This is an uncharacterized protein from Bacillus subtilis (strain 168).